We begin with the raw amino-acid sequence, 388 residues long: Leucine aminopeptidase 1 (388 aa).

Positions 1 to 19 are cleaved as a signal peptide; sequence MKSLSLLALAAIAPPAAVA. The propeptide occupies 20-88; the sequence is AVVDHQVPFE…SVKSHERIQV (69 aa). N-linked (GlcNAc...) asparagine glycosylation occurs at asparagine 180. Positions 188, 207, 246, and 273 each coordinate Zn(2+). A disulfide bridge connects residues cysteine 322 and cysteine 326. Residue histidine 355 coordinates Zn(2+).

It belongs to the peptidase M28 family. M28E subfamily. Monomer. The cofactor is Zn(2+).

The protein localises to the secreted. Extracellular aminopeptidase that allows assimilation of proteinaceous substrates. The chain is Leucine aminopeptidase 1 (LAP1) from Coccidioides posadasii (strain RMSCC 757 / Silveira) (Valley fever fungus).